The chain runs to 117 residues: Non-specific lipid-transfer protein (117 aa).

The signal sequence occupies residues 1 to 26; the sequence is MASSAVIKLACAVLLCIVVAAPYAEA. Cystine bridges form between Cys-30-Cys-76, Cys-40-Cys-53, Cys-54-Cys-99, and Cys-74-Cys-113.

The protein belongs to the plant LTP family.

In terms of biological role, plant non-specific lipid-transfer proteins transfer phospholipids as well as galactolipids across membranes. May play a role in wax or cutin deposition in the cell walls of expanding epidermal cells and certain secretory tissues. This chain is Non-specific lipid-transfer protein, found in Spinacia oleracea (Spinach).